The chain runs to 733 residues: Vinexin (733 aa).

Disordered stretches follow at residues 1–51 (MARI…SNLD), 129–165 (TWPG…RQDK), 224–285 (SARA…NQVP), and 352–448 (ETRL…KRKA). A compositionally biased stretch (basic and acidic residues) spans 32 to 42 (DPNRVHTKEQL). The span at 147 to 157 (QHAQNWSATWT) shows a compositional bias: polar residues. The 69-residue stretch at 164-232 (DKRWVKYEGI…VSARASSAEP (69 aa)) folds into the SoHo domain. Composition is skewed to polar residues over residues 245–256 (PGTTETSSGRNW) and 264–277 (RNTF…SSSG). Ser-412 and Ser-459 each carry phosphoserine. SH3 domains lie at 444-503 (KKRK…VLPA) and 518-579 (LEYG…INRE). The tract at residues 444-579 (KKRKAARLKF…PASYVQINRE (136 aa)) is binds to vinculin. The disordered stretch occupies residues 584 to 672 (LCDDGPQLPA…INLGPSSPNT (89 aa)). Residue Ser-594 is modified to Phosphoserine; by MAPK1. Residues 597-613 (PTTTAHLSSHSHPSSIP) are compositionally biased toward low complexity. Phosphoserine is present on residues Ser-607, Ser-610, and Ser-624. The span at 638–651 (EPRSQTQSLNTPGP) shows a compositional bias: polar residues. An SH3 3 domain is found at 674–733 (IHWTPYRAMYQYRPQNEDELELREGDRVDVMQQCDDGWFVGVSRRTQKFGTFPGNYVAPV). A binds to SOS region spans residues 674–733 (IHWTPYRAMYQYRPQNEDELELREGDRVDVMQQCDDGWFVGVSRRTQKFGTFPGNYVAPV).

As to quaternary structure, interacts with vinculin by the first two SH3 domains and the proline rich region of vinculin. Binds to SOS (guanine nucleotide exchange factor of RAS and RAC), through its third SH3 domain. The formation of this complex is down-regulated by phosphorylation of SOS. Interacts with SAFB2, INPPL1/SHIP2 and SRCIN1. Interacts with DLG5 through its third SH3 domain. Interacts with SOCS7 and MAPK1/ERK2. Interacts with FASLG. In terms of processing, phosphorylated at Ser-594 by MAPK1/ERK2 during cell spreading.

It localises to the cell junction. It is found in the focal adhesion. Its subcellular location is the cytoplasm. The protein localises to the cytoskeleton. In terms of biological role, promotes up-regulation of actin stress fiber formation. The polypeptide is Vinexin (Sorbs3) (Mus musculus (Mouse)).